Consider the following 137-residue polypeptide: NADH-quinone oxidoreductase subunit A 1 (137 aa).

Transmembrane regions (helical) follow at residues 14 to 34, 66 to 86, and 95 to 115; these read FAAF…VSAL, FYLV…LFAW, and WAGL…LVYL.

It belongs to the complex I subunit 3 family. In terms of assembly, NDH-1 is composed of 13 different subunits. Subunits NuoA, H, J, K, L, M, N constitute the membrane sector of the complex.

It is found in the cell inner membrane. It catalyses the reaction a quinone + NADH + 5 H(+)(in) = a quinol + NAD(+) + 4 H(+)(out). In terms of biological role, NDH-1 shuttles electrons from NADH, via FMN and iron-sulfur (Fe-S) centers, to quinones in the respiratory chain. The immediate electron acceptor for the enzyme in this species is believed to be ubiquinone. Couples the redox reaction to proton translocation (for every two electrons transferred, four hydrogen ions are translocated across the cytoplasmic membrane), and thus conserves the redox energy in a proton gradient. This Pseudomonas paraeruginosa (strain DSM 24068 / PA7) (Pseudomonas aeruginosa (strain PA7)) protein is NADH-quinone oxidoreductase subunit A 1.